Reading from the N-terminus, the 144-residue chain is MNFKYIVAVSFLIASTYARSVKNDEQSLSQRDVLEEESLREIRGIGGALLSAGKSALKGLAKGLAEHFANGKRTAEEHEVMKRLEAVMRDLDSLDYPEEASEMETRSFNQEEIANLFTKKEKRILGPVLDLVGRALRGLLKKIG.

A signal peptide spans 1-18; that stretch reads MNFKYIVAVSFLIASTYA. A propeptide spanning residues 19–43 is cleaved from the precursor; sequence RSVKNDEQSLSQRDVLEEESLREIR. Residue asparagine 70 is modified to Asparagine amide. A propeptide spanning residues 74–123 is cleaved from the precursor; the sequence is TAEEHEVMKRLEAVMRDLDSLDYPEEASEMETRSFNQEEIANLFTKKEKR. At isoleucine 143 the chain carries Isoleucine amide.

Belongs to the bombinin family. In terms of tissue distribution, expressed by the skin glands.

Its subcellular location is the secreted. Antimicrobial peptide with activity against Gram-positive and -negative bacteria and fungi. Shows activity against P.acnes (MIC=5 uM), E.coli (MIC=5-6.3 uM), S.aureus (MIC=5-6.3 uM), M.luteus, S.cerevisiae and C.albicans (MIC=10-12.5 uM). Also reduces the production of interleukin (IL)-8 and granulocyte-macrophage colony stimulating factor (CSF2) in normal human epidermal keratinocytes (NHEKs). Shows anticancer activity against three human hepatoma cell lines. In vivo, using the rat ear edema model, suppress P.acnes-induced skin inflammation, significantly reducing the ear thickness. Shows weak hemolytic activity against human erythrocytes. In terms of biological role, shows weak antimicrobial activity but high hemolytic activity. This Bombina orientalis (Oriental fire-bellied toad) protein is Bombinins BLP-7/GH-2.